The following is a 302-amino-acid chain: Coiled-coil domain-containing protein 2 (302 aa).

Positions 1–22 (MKNFGLLVVCLSLATLVIPSDG) are cleaved as a signal peptide. Residues 198-234 (FADAMEKKAEALENAAEAAAEYISDQSEEVDDLSEEV) are a coiled coil. The disordered stretch occupies residues 221–257 (SDQSEEVDDLSEEVLDDDSDENDSTSSESEVEDSDVD). Acidic residues predominate over residues 223–257 (QSEEVDDLSEEVLDDDSDENDSTSSESEVEDSDVD). Asn242 carries N-linked (GlcNAc...) asparagine glycosylation.

Component of the acid-insoluble organic matrix of calcified layers of the shell (at protein level).

Its subcellular location is the secreted. The polypeptide is Coiled-coil domain-containing protein 2 (Lottia gigantea (Giant owl limpet)).